We begin with the raw amino-acid sequence, 391 residues long: D-gluconate/D-galactonate dehydratase (391 aa).

Residue glutamate 198 participates in Mg(2+) binding. Histidine 200 (proton donor) is an active-site residue. The Mg(2+) site is built by glutamate 224 and glutamate 250. Histidine 300 (proton acceptor) is an active-site residue.

Belongs to the mandelate racemase/muconate lactonizing enzyme family. GaD subfamily. In terms of assembly, homooctamer. Mg(2+) is required as a cofactor.

The catalysed reaction is D-gluconate = 2-dehydro-3-deoxy-D-gluconate + H2O. It carries out the reaction D-galactonate = 2-dehydro-3-deoxy-D-galactonate + H2O. It participates in carbohydrate acid metabolism; D-gluconate degradation. Functionally, involved in the degradation of glucose and galactose via the nonphosphorylative variant of Entner-Doudoroff pathway. Catalyzes the dehydration of gluconate to produce 2-keto-3-deoxygluconate (KDG). It is also able to catalyze the dehydration of galactonate to produce 2-keto-3-deoxygalactonate (KDGal). In Picrophilus torridus (strain ATCC 700027 / DSM 9790 / JCM 10055 / NBRC 100828 / KAW 2/3), this protein is D-gluconate/D-galactonate dehydratase.